The sequence spans 545 residues: CTP synthase (545 aa).

The tract at residues 1–266 (MTTNYIFVTG…DDYICKRFSL (266 aa)) is amidoligase domain. CTP is bound at residue serine 14. Serine 14 provides a ligand contact to UTP. Residues 15–20 (SLGKGI) and aspartate 72 contribute to the ATP site. Residues aspartate 72 and glutamate 140 each coordinate Mg(2+). CTP contacts are provided by residues 147–149 (DIE), 187–192 (KTKPTQ), and lysine 223. Residues 187 to 192 (KTKPTQ) and lysine 223 contribute to the UTP site. 239-241 (KDV) provides a ligand contact to ATP. The 252-residue stretch at 291–542 (TIGMVGKYIE…VKAANEHQKR (252 aa)) folds into the Glutamine amidotransferase type-1 domain. Glycine 352 contributes to the L-glutamine binding site. The Nucleophile; for glutamine hydrolysis role is filled by cysteine 379. Residues 380–383 (LGMQ), glutamate 403, and arginine 470 each bind L-glutamine. Active-site residues include histidine 515 and glutamate 517.

The protein belongs to the CTP synthase family. As to quaternary structure, homotetramer.

The catalysed reaction is UTP + L-glutamine + ATP + H2O = CTP + L-glutamate + ADP + phosphate + 2 H(+). The enzyme catalyses L-glutamine + H2O = L-glutamate + NH4(+). It carries out the reaction UTP + NH4(+) + ATP = CTP + ADP + phosphate + 2 H(+). It functions in the pathway pyrimidine metabolism; CTP biosynthesis via de novo pathway; CTP from UDP: step 2/2. Its activity is regulated as follows. Allosterically activated by GTP, when glutamine is the substrate; GTP has no effect on the reaction when ammonia is the substrate. The allosteric effector GTP functions by stabilizing the protein conformation that binds the tetrahedral intermediate(s) formed during glutamine hydrolysis. Inhibited by the product CTP, via allosteric rather than competitive inhibition. Functionally, catalyzes the ATP-dependent amination of UTP to CTP with either L-glutamine or ammonia as the source of nitrogen. Regulates intracellular CTP levels through interactions with the four ribonucleotide triphosphates. This is CTP synthase from Salmonella paratyphi A (strain ATCC 9150 / SARB42).